The sequence spans 634 residues: Chaperone protein HtpG (634 aa).

Residues 1–342 are a; substrate-binding; the sequence is MSVETQKETL…SNDLSLNVSR (342 aa). The interval 343 to 559 is b; sequence EILQKDPVID…EQDLGLQMRQ (217 aa). The c stretch occupies residues 560–634; that stretch reads ILEASGQKVP…LNKLLVELSA (75 aa).

This sequence belongs to the heat shock protein 90 family. Homodimer.

It is found in the cytoplasm. In terms of biological role, molecular chaperone. Has ATPase activity. In Ectopseudomonas mendocina (strain ymp) (Pseudomonas mendocina), this protein is Chaperone protein HtpG.